We begin with the raw amino-acid sequence, 229 residues long: Sugar fermentation stimulation protein homolog (229 aa).

This sequence belongs to the SfsA family.

This is Sugar fermentation stimulation protein homolog from Carboxydothermus hydrogenoformans (strain ATCC BAA-161 / DSM 6008 / Z-2901).